We begin with the raw amino-acid sequence, 293 residues long: 4-hydroxy-3-methylbut-2-enyl diphosphate reductase (293 aa).

[4Fe-4S] cluster is bound at residue cysteine 12. 2 residues coordinate (2E)-4-hydroxy-3-methylbut-2-enyl diphosphate: histidine 40 and histidine 74. Positions 40 and 74 each coordinate dimethylallyl diphosphate. Residues histidine 40 and histidine 74 each coordinate isopentenyl diphosphate. Cysteine 96 contributes to the [4Fe-4S] cluster binding site. Histidine 128 contacts (2E)-4-hydroxy-3-methylbut-2-enyl diphosphate. Histidine 128 is a dimethylallyl diphosphate binding site. Histidine 128 contacts isopentenyl diphosphate. The Proton donor role is filled by glutamate 130. A (2E)-4-hydroxy-3-methylbut-2-enyl diphosphate-binding site is contributed by threonine 166. Cysteine 202 contributes to the [4Fe-4S] cluster binding site. (2E)-4-hydroxy-3-methylbut-2-enyl diphosphate-binding residues include serine 230, serine 231, asparagine 232, and serine 274. Positions 230, 231, 232, and 274 each coordinate dimethylallyl diphosphate. The isopentenyl diphosphate site is built by serine 230, serine 231, asparagine 232, and serine 274.

The protein belongs to the IspH family. Requires [4Fe-4S] cluster as cofactor.

The catalysed reaction is isopentenyl diphosphate + 2 oxidized [2Fe-2S]-[ferredoxin] + H2O = (2E)-4-hydroxy-3-methylbut-2-enyl diphosphate + 2 reduced [2Fe-2S]-[ferredoxin] + 2 H(+). The enzyme catalyses dimethylallyl diphosphate + 2 oxidized [2Fe-2S]-[ferredoxin] + H2O = (2E)-4-hydroxy-3-methylbut-2-enyl diphosphate + 2 reduced [2Fe-2S]-[ferredoxin] + 2 H(+). It participates in isoprenoid biosynthesis; dimethylallyl diphosphate biosynthesis; dimethylallyl diphosphate from (2E)-4-hydroxy-3-methylbutenyl diphosphate: step 1/1. The protein operates within isoprenoid biosynthesis; isopentenyl diphosphate biosynthesis via DXP pathway; isopentenyl diphosphate from 1-deoxy-D-xylulose 5-phosphate: step 6/6. In terms of biological role, catalyzes the conversion of 1-hydroxy-2-methyl-2-(E)-butenyl 4-diphosphate (HMBPP) into a mixture of isopentenyl diphosphate (IPP) and dimethylallyl diphosphate (DMAPP). Acts in the terminal step of the DOXP/MEP pathway for isoprenoid precursor biosynthesis. This Cytophaga hutchinsonii (strain ATCC 33406 / DSM 1761 / CIP 103989 / NBRC 15051 / NCIMB 9469 / D465) protein is 4-hydroxy-3-methylbut-2-enyl diphosphate reductase.